The primary structure comprises 893 residues: Beta-adaptin-like protein C (893 aa).

Residues Thr-593 to Ser-621 are disordered.

The protein belongs to the adaptor complexes large subunit family. As to quaternary structure, adaptor protein complexes are heterotetramers composed of two large adaptins (beta-type subunit and alpha-type or delta-type or epsilon-type or gamma-type subunit), a medium adaptin (mu-type subunit) and a small adaptin (sigma-type subunit).

It localises to the golgi apparatus. The protein resides in the trans-Golgi network. It is found in the cytoplasmic vesicle. Its subcellular location is the clathrin-coated vesicle membrane. Subunit of clathrin-associated adaptor protein complex that plays a role in protein sorting in the late-Golgi/trans-Golgi network (TGN) and/or endosomes. The AP complexes mediate both the recruitment of clathrin to membranes and the recognition of sorting signals within the cytosolic tails of transmembrane cargo molecules. In Arabidopsis thaliana (Mouse-ear cress), this protein is Beta-adaptin-like protein C (BETAC-AD).